We begin with the raw amino-acid sequence, 262 residues long: Putative BTB/POZ domain-containing protein L834 (262 aa).

A BTB domain is found at Phe-16–Ile-86.

The protein belongs to the mimivirus BTB/WD family.

The polypeptide is Putative BTB/POZ domain-containing protein L834 (Acanthamoeba polyphaga (Amoeba)).